The chain runs to 898 residues: Interleukin enhancer-binding factor 3-B (898 aa).

The DZF domain maps to 5–379 (RIFLNDDRHV…ALKRPIEEDG (375 aa)). Disordered regions lie at residues 52 to 87 (QEKD…NPTR), 374 to 403 (PIEE…PPQA), 468 to 529 (LPTG…VMEL), 627 to 651 (PPPQ…RGGF), and 711 to 799 (GEGY…QGAA). Residues 61 to 71 (ENPEPEETETT) show a composition bias toward acidic residues. 2 stretches are compositionally biased toward basic and acidic residues: residues 72 to 81 (EEGKDSEAKT) and 374 to 384 (PIEEDGEDKSP). The Bipartite nuclear localization signal motif lies at 372-390 (KRPIEEDGEDKSPSKKKKK). The DRBM 1 domain maps to 399 to 468 (EPPQAMNALM…AVKVLQDMGL (70 aa)). Acidic residues predominate over residues 474–483 (EKEESVDESE). The segment covering 489-513 (QTPSQTADSEQADSSAGDQSESGKQ) has biased composition (polar residues). The DRBM 2 domain maps to 521–587 (HGKNPVMELN…ALSALEKLFP (67 aa)). Residues 637-651 (RGGMNRGRGRGRGGF) show a composition bias toward gly residues. Residues 717–747 (PTPPKPFVKKPPPPQQQQQPPPQHASNPPKP) show a composition bias toward pro residues. Positions 749–782 (YNQGYQGHQGGQQQQQPQQQQQQTYNQNQYSNYG) are enriched in low complexity.

In terms of assembly, a component of a ybx2/frgy2-containing mRNA-ribonucleoprotein (mRNP) complex. Also a component of the CCAAT box transcription factor (CBTF) complex. Phosphorylated. Phosphorylation affects nuclear translocation. Post-translationally, methylated by protein arginine N-methyltransferase 1 (prmt1b) in the RGG-rich domain. Methylation decreases DNA-binding and thereby decreases transcription of the gata2 gene, but does not regulate dsRNA binding or subcellular localization.

It localises to the nucleus. Its subcellular location is the cytoplasm. RNA-binding protein that plays an essential role in the biogenesis of circular RNAs (circRNAs) which are produced by back-splicing circularization of pre-mRNAs. Within the nucleus, promotes circRNAs processing by stabilizing the regulatory elements residing in the flanking introns of the circularized exons. Plays thereby a role in the back-splicing of a subset of circRNAs. As a consequence, participates in a wide range of transcriptional and post-transcriptional processes. Binds to poly-U elements and AU-rich elements (AREs) in the 3'-UTR of target mRNAs. Upon viral infection, ILF3 accumulates in the cytoplasm and participates in the innate antiviral response. Mechanistically, ILF3 becomes phosphorylated and activated by the double-stranded RNA-activated protein kinase/PKR which releases ILF3 from cellular mature circRNAs. In turn, unbound ILF3 molecules are able to interact with and thus inhibit viral mRNAs. Has a cytoplasmic role early in development as part of a ribonucleoprotein (mRNP) complex which may regulate mRNA transport and/or translation. Following nuclear localization at the mid-blastula transition, acts as a transcription factor and binds the 5'-CCAAT-3' promoter sequence to regulate transcription of the gata2 gene as a subunit of the CCAAT box transcription factor (CBTF). Its role as an mRNP component negatively regulates its activity as a transcription factor by precluding its nuclear localization. In Xenopus laevis (African clawed frog), this protein is Interleukin enhancer-binding factor 3-B (ilf3-b).